Here is a 280-residue protein sequence, read N- to C-terminus: Phosphatidylglycerol--prolipoprotein diacylglyceryl transferase (280 aa).

4 helical membrane passes run 30–50 (WYGLAYVVGILLGWFYARRIV), 71–91 (FLLWAAGGIVLGGRIGYILFY), 106–126 (IWNGGMSFHGGLVGTTLAMII), and 132–152 (AIPIWSLFDVVAAVVPIGLFF). Arginine 154 contacts a 1,2-diacyl-sn-glycero-3-phospho-(1'-sn-glycerol). A run of 3 helical transmembrane segments spans residues 188-208 (QLYEAALEGLVLLAVLAWFVY), 217-237 (GLVTGIFVCGYAASRIFVEFF), and 251-271 (WLTMGMVLSVPMALIGIWAIA).

The protein belongs to the Lgt family.

Its subcellular location is the cell inner membrane. It catalyses the reaction L-cysteinyl-[prolipoprotein] + a 1,2-diacyl-sn-glycero-3-phospho-(1'-sn-glycerol) = an S-1,2-diacyl-sn-glyceryl-L-cysteinyl-[prolipoprotein] + sn-glycerol 1-phosphate + H(+). The protein operates within protein modification; lipoprotein biosynthesis (diacylglyceryl transfer). Its function is as follows. Catalyzes the transfer of the diacylglyceryl group from phosphatidylglycerol to the sulfhydryl group of the N-terminal cysteine of a prolipoprotein, the first step in the formation of mature lipoproteins. The protein is Phosphatidylglycerol--prolipoprotein diacylglyceryl transferase of Sinorhizobium medicae (strain WSM419) (Ensifer medicae).